We begin with the raw amino-acid sequence, 497 residues long: Serine hydroxymethyltransferase (497 aa).

Residues Leu-176 and 180–182 contribute to the (6S)-5,6,7,8-tetrahydrofolate site; that span reads GHL. The residue at position 289 (Lys-289) is an N6-(pyridoxal phosphate)lysine.

This sequence belongs to the SHMT family. Homodimer. Pyridoxal 5'-phosphate serves as cofactor.

Its subcellular location is the cytoplasm. The catalysed reaction is (6R)-5,10-methylene-5,6,7,8-tetrahydrofolate + glycine + H2O = (6S)-5,6,7,8-tetrahydrofolate + L-serine. The protein operates within one-carbon metabolism; tetrahydrofolate interconversion. Its pathway is amino-acid biosynthesis; glycine biosynthesis; glycine from L-serine: step 1/1. In terms of biological role, catalyzes the reversible interconversion of serine and glycine with tetrahydrofolate (THF) serving as the one-carbon carrier. This reaction serves as the major source of one-carbon groups required for the biosynthesis of purines, thymidylate, methionine, and other important biomolecules. Also exhibits THF-independent aldolase activity toward beta-hydroxyamino acids, producing glycine and aldehydes, via a retro-aldol mechanism. This chain is Serine hydroxymethyltransferase, found in Chlamydia trachomatis serovar L2b (strain UCH-1/proctitis).